A 151-amino-acid polypeptide reads, in one-letter code: Protein-export protein SecB (151 aa).

This sequence belongs to the SecB family. Homotetramer, a dimer of dimers. One homotetramer interacts with 1 SecA dimer.

Its subcellular location is the cytoplasm. In terms of biological role, one of the proteins required for the normal export of preproteins out of the cell cytoplasm. It is a molecular chaperone that binds to a subset of precursor proteins, maintaining them in a translocation-competent state. It also specifically binds to its receptor SecA. In Azoarcus sp. (strain BH72), this protein is Protein-export protein SecB.